Here is a 648-residue protein sequence, read N- to C-terminus: Threonine--tRNA ligase (648 aa).

Residues 1 to 63 form the TGS domain; that stretch reads MAQISLTFPD…TQDAAIAIHT (63 aa). Positions 247-544 are catalytic; that stretch reads DHRKLGREMN…LIEEHAGKLP (298 aa). Residues C344, H395, and H521 each contribute to the Zn(2+) site.

This sequence belongs to the class-II aminoacyl-tRNA synthetase family. Homodimer. It depends on Zn(2+) as a cofactor.

Its subcellular location is the cytoplasm. The enzyme catalyses tRNA(Thr) + L-threonine + ATP = L-threonyl-tRNA(Thr) + AMP + diphosphate + H(+). In terms of biological role, catalyzes the attachment of threonine to tRNA(Thr) in a two-step reaction: L-threonine is first activated by ATP to form Thr-AMP and then transferred to the acceptor end of tRNA(Thr). Also edits incorrectly charged L-seryl-tRNA(Thr). The protein is Threonine--tRNA ligase of Ruegeria sp. (strain TM1040) (Silicibacter sp.).